A 627-amino-acid polypeptide reads, in one-letter code: Altered inheritance of mitochondria protein 9, mitochondrial (627 aa).

The N-terminal 43 residues, M1–V43, are a transit peptide targeting the mitochondrion.

Belongs to the AIM9 family.

It localises to the mitochondrion. The sequence is that of Altered inheritance of mitochondria protein 9, mitochondrial (AIM9) from Saccharomyces cerevisiae (strain RM11-1a) (Baker's yeast).